A 142-amino-acid chain; its full sequence is Maximins y/Hw (142 aa).

The N-terminal stretch at 1 to 18 (MIFKYIVAVSFLIASGYA) is a signal peptide. Residues 19–43 (RSVKNDEQSLSQREVLEEESLREIR) constitute a propeptide that is removed on maturation. Phenylalanine 68 is modified (phenylalanine amide). Residues 72–121 (TAEDHEVMKRLEAVIRDLDSLDHSEEASERETRGFNQEEIANLFTKKEKR) constitute a propeptide that is removed on maturation. At isoleucine 141 the chain carries Isoleucine amide.

The protein belongs to the bombinin family. Expressed by the skin glands.

The protein localises to the secreted. Functionally, maximin-y shows antimicrobial activity against bacteria and against the fungus C.albicans. It has little hemolytic activity. In terms of biological role, maximin-Hw shows antimicrobial activity against bacteria and against the fungus C.albicans. Shows strong hemolytic activity. The protein is Maximins y/Hw of Bombina maxima (Giant fire-bellied toad).